The primary structure comprises 518 residues: MGVTKAEAVAGDGGKVVDDIEALADLRKEPAWKRFLSHIGPGFMVCLAYLDPGNMETDLQAGANHKYELLWVILIGLIFALIIQSLSANLGVVTGRHLAELCKTEYPVWVKTCLWLLAELAVIASDIPEVIGTGFAFNLLFHIPVWTGVLIAGSSTLLLLGLQRYGVRKLEVVVALLVFVMAGCFFVEMSIVKPPVNEVLQGLFIPRLSGPGATGDSIALLGALVMPHNLFLHSALVLSRNTPASAKGMKDVCRFFLFESGIALFVALLVNIAIISVSGTVCNATNLSPEDAVKCSDLTLDSSSFLLRNVLGKSSATVYGVALLASGQSSTITGTYAGQYVMQGFLDIKMKQWLRNLMTRSIAIVPSLIVSIIGGSSGAGRLIVIASMILSFELPFALIPLLKFSSSSNKMGENKNSIYIVGFSWVLGFVIIGINIYFLSTKLVGWILHNALPTFANVLIGIVLFPLMLLYVVAVIYLTFRKDTVKFVSRRELQAGDDTEKAQVATCVADEHSKEPPV.

12 helical membrane-spanning segments follow: residues 35-55, 68-88, 107-127, 131-151, 172-192, 218-238, 255-275, 315-337, 357-377, 382-402, 418-438, and 458-478; these read FLSH…PGNM, ELLW…SLSA, PVWV…ASDI, IGTG…GVLI, VVVA…MSIV, IALL…ALVL, FFLF…IAII, SATV…GTYA, LMTR…GGSS, LIVI…IPLL, IYIV…NIYF, and VLIG…VIYL.

The protein belongs to the NRAMP (TC 2.A.55) family.

It localises to the membrane. In terms of biological role, probable metal transporter that may participate in the control of iron homeostasis. In Oryza sativa subsp. japonica (Rice), this protein is Metal transporter Nramp1 (NRAMP1).